Reading from the N-terminus, the 493-residue chain is ATP synthase subunit beta, chloroplastic (493 aa).

170-177 (GGAGVGKT) is a binding site for ATP.

It belongs to the ATPase alpha/beta chains family. As to quaternary structure, F-type ATPases have 2 components, CF(1) - the catalytic core - and CF(0) - the membrane proton channel. CF(1) has five subunits: alpha(3), beta(3), gamma(1), delta(1), epsilon(1). CF(0) has four main subunits: a(1), b(1), b'(1) and c(9-12).

The protein localises to the plastid. The protein resides in the chloroplast thylakoid membrane. The catalysed reaction is ATP + H2O + 4 H(+)(in) = ADP + phosphate + 5 H(+)(out). Produces ATP from ADP in the presence of a proton gradient across the membrane. The catalytic sites are hosted primarily by the beta subunits. This is ATP synthase subunit beta, chloroplastic from Chaetosphaeridium globosum (Charophycean green alga).